The following is a 7968-amino-acid chain: Obscurin (7968 aa).

5 consecutive Ig-like domains span residues 10–100 (PRFL…LQVD), 110–202 (PHFL…LVVD), 236–322 (PASP…QTYS), 331–414 (PAVP…RTVA), and 420–508 (GNLL…VSAP). Residues Cys-31 and Cys-82 are joined by a disulfide bond. Residues 228-249 (EAMRAEGAPASPPSTGTRTCTV) are disordered. Residues 240–249 (PSTGTRTCTV) show a composition bias toward polar residues. 2 cysteine pairs are disulfide-bonded: Cys-259–Cys-311 and Cys-354–Cys-404. Ser-395 carries the post-translational modification Phosphoserine. The Fibronectin type-III 1 domain maps to 515-612 (PPVDPVVKAR…FPGTVHLAPK (98 aa)). Ig-like domains are found at residues 619–698 (LKAV…MEVR), 701–790 (PGLT…YQLS), 798–884 (LHKD…LRVS), 886–977 (PKVV…DVKE), 978–1066 (PKVV…FRLH), 1070–1161 (PKMM…HITE), 1162–1252 (PKGV…LHIT), 1254–1345 (PKAV…DVSE), 1346–1432 (PKAV…LSFS), 1438–1524 (PKVV…LSFH), 1530–1621 (PKAV…HVAE), and 1622–1719 (PKVV…PQIS). 12 disulfide bridges follow: Cys-819–Cys-870, Cys-912–Cys-962, Cys-1004–Cys-1054, Cys-1096–Cys-1146, Cys-1188–Cys-1238, Cys-1280–Cys-1330, Cys-1372–Cys-1422, Cys-1464–Cys-1514, Cys-1556–Cys-1606, Cys-1648–Cys-1698, Cys-1723–Cys-1791, and Cys-1830–Cys-1880. In terms of domain architecture, Fibronectin type-III 2 spans 1731 to 1808 (KEHEDIILTA…DFPVQVEEVA (78 aa)). 29 consecutive Ig-like domains span residues 1809–1894 (AKFC…LTVS), 1896–1982 (PRVV…AALR), 1987–2071 (PVLF…AKLT), 2077–2162 (VRLV…LVVT), 2165–2249 (PVSF…ASVK), 2289–2380 (PVTL…QSIT), 2468–2559 (PVVL…REVT), 2564–2643 (LQDA…LEVR), 2646–2730 (PVVF…ARVR), 2736–2823 (VGIT…LIVR), 2826–2908 (PAAI…STAS), 2920–2999 (EELT…AQLL), 3003–3092 (RRVH…LRVT), 3095–3183 (PSVF…VHAR), 3184–3268 (PVRF…ATLT), 3273–3356 (PAQF…ASLT), 3359–3444 (PMPA…ATLT), 3449–3532 (PAKF…ATLT), 3537–3620 (PARF…AMLT), 3625–3708 (PIKF…AMLT), 3713–3796 (PSKF…ATLT), 3801–3884 (PARF…ATLT), 3890–3973 (PVFR…ATLT), 3978–4062 (PVRF…ASLS), 4068–4160 (PKFK…PEVT), 4171–4239 (TADE…NHAS), 4248–4337 (PEVT…LKVT), 4340–4427 (NTVV…FLTV), and 4430–4518 (WRLE…ARLT). Disulfide bonds link Cys-2187-Cys-2237, Cys-2311-Cys-2361, and Cys-2490-Cys-2540. The cysteines at positions 2668 and 2718 are disulfide-linked. Cystine bridges form between Cys-2848/Cys-2898 and Cys-2937/Cys-2987. A Phosphoserine modification is found at Ser-2889. Intrachain disulfides connect Cys-3117/Cys-3167, Cys-3206/Cys-3256, Cys-3295/Cys-3344, Cys-3383/Cys-3432, Cys-3471/Cys-3520, Cys-3559/Cys-3608, Cys-3647/Cys-3696, Cys-3735/Cys-3784, Cys-3823/Cys-3872, Cys-3911/Cys-3961, Cys-4000/Cys-4050, and Cys-4089/Cys-4141. The residue at position 4015 (Ser-4015) is a Phosphoserine. A disulfide bridge connects residues Cys-4453 and Cys-4508. In terms of domain architecture, Fibronectin type-III 3 spans 4525 to 4619 (PPEDAEVVAR…LPQTVRLAEP (95 aa)). An Ig-like 47 domain is found at 4624 to 4714 (PPQPSAPESR…AAATFQVALS (91 aa)). The disordered stretch occupies residues 4749–4785 (MSREPTLDSISELPEEDGRSQRLPQEAEEVAPDLSEG). A Phosphoserine modification is found at Ser-4750. Thr-4754 carries the post-translational modification Phosphothreonine. Position 4757 is a phosphoserine (Ser-4757). Residue Thr-4788 is modified to Phosphothreonine. Phosphoserine is present on Ser-4805. The interval 4820 to 4860 (LKKAGRPGTSPLASKVGAPAAPSVKPQQQQEPLAAVRPPLG) is disordered. The region spanning 4872–4901 (MDKAAVKIQAAFKGYKVRKEMKQQEGPMFS) is the IQ domain. 2 Ig-like domains span residues 4898–4989 (PMFS…VVVS) and 5126–5215 (PVFL…AELR). 2 cysteine pairs are disulfide-bonded: Cys-4919-Cys-4971 and Cys-5147-Cys-5199. Residues 5238–5256 (AQGYLSSREQEGTESTTDE) are compositionally biased toward polar residues. The tract at residues 5238 to 5257 (AQGYLSSREQEGTESTTDEG) is disordered. Ig-like domains lie at 5260–5349 (PQVV…ARLL) and 5371–5467 (PRML…LHVS). The disordered stretch occupies residues 5554–5596 (AKLQVPGGDSDEDSKTPSASPRHGRSRPSSSIQESSSESEDGD). Position 5563 is a phosphoserine (Ser-5563). Residue Thr-5569 is modified to Phosphothreonine. A compositionally biased stretch (low complexity) spans 5570–5589 (PSASPRHGRSRPSSSIQESS). 2 positions are modified to phosphoserine: Ser-5571 and Ser-5573. An SH3 domain is found at 5600–5667 (EIFDIYVVTA…SPAYLDRRLK (68 aa)). Residues 5693 to 5877 (RLSSVIQELL…SALPQRAENK (185 aa)) form the DH domain. In terms of domain architecture, PH spans 5895–6004 (EPIRQGHFIV…WVKEICGIQQ (110 aa)). Arg-5975 serves as a coordination point for a 1,2-diacyl-sn-glycero-3-phospho-(1D-myo-inositol-4,5-bisphosphate). A 1,2-diacyl-sn-glycero-3-phospho-(1D-myo-inositol-3,4-bisphosphate) is bound at residue Arg-5980. Ig-like domains are found at residues 6014-6097 (PDFE…GNCS) and 6108-6200 (PRFV…LRIQ). 2 cysteine pairs are disulfide-bonded: Cys-6035-Cys-6087 and Cys-6129-Cys-6182. The interval 6237–6296 (RLLGPKAPGPSTGDLTGPGPCPRGAPALQETGSQPPVTGTSEAPAVPPRVPQPLLHEGPE) is disordered. Residues 6266–6277 (ETGSQPPVTGTS) show a composition bias toward polar residues. Residues 6357–6445 (PSMQVTIEDV…GQVLCKAELL (89 aa)) form the Ig-like 54 domain. The Protein kinase 1 domain maps to 6468 to 6721 (YEVKEEIGRG…AAQCLSHPWF (254 aa)). ATP-binding positions include 6474–6482 (IGRGVFGFV) and Lys-6497. Catalysis depends on Asp-6587, which acts as the Proton acceptor. 3 disordered regions span residues 6777–6863 (GVAR…AQGC), 6952–7176 (SGTH…TMRK), and 7217–7272 (VSQS…TPWE). Ser-6831 carries the phosphoserine modification. The span at 7052-7061 (AVAPCPPGSF) shows a compositional bias: pro residues. The span at 7115–7139 (SSPGSASQASSSQVSSLRVGSSQVG) shows a compositional bias: low complexity. The span at 7160–7172 (DSTPTLQRPQEQA) shows a compositional bias: polar residues. Residues 7227–7242 (EARAESQSEEQQEARA) show a composition bias toward basic and acidic residues. A Phosphoserine modification is found at Ser-7244. In terms of domain architecture, Ig-like 55 spans 7463-7552 (PTFLRELSDE…GTVTTTGVLR (90 aa)). Cys-7484 and Cys-7536 are joined by a disulfide. The Fibronectin type-III 4 domain occupies 7557-7649 (PSSSPCPDIG…PSEQVLLGGP (93 aa)). Residues 7672–7924 (FAFQTQIQRG…ASSCLQCPWL (253 aa)) form the Protein kinase 2 domain. Residues 7678 to 7686 (IQRGRFSVV) and Lys-7701 each bind ATP. The Proton acceptor role is filled by Asp-7791.

The protein belongs to the protein kinase superfamily. CAMK Ser/Thr protein kinase family. As to quaternary structure, interacts (via protein kinase domain 2) with CDH2 and (via protein kinase domain 1) with ATP1B1. Isoform 3 interacts with TTN/titin and calmodulin. Isoform 3 interacts with ANK1 isoform Mu17/ank1.5. Mg(2+) is required as a cofactor. Autophosphorylated by protein kinase domains 1 and 2.

The protein resides in the cytoplasm. It is found in the myofibril. The protein localises to the sarcomere. Its subcellular location is the m line. It localises to the z line. The protein resides in the cell membrane. It is found in the sarcolemma. The protein localises to the nucleus. The catalysed reaction is L-seryl-[protein] + ATP = O-phospho-L-seryl-[protein] + ADP + H(+). It catalyses the reaction L-threonyl-[protein] + ATP = O-phospho-L-threonyl-[protein] + ADP + H(+). In terms of biological role, structural component of striated muscles which plays a role in myofibrillogenesis. Probably involved in the assembly of myosin into sarcomeric A bands in striated muscle. Has serine/threonine protein kinase activity and phosphorylates N-cadherin CDH2 and sodium/potassium-transporting ATPase subunit ATP1B1. Binds (via the PH domain) strongly to phosphatidylinositol 3,4-bisphosphate (PtdIns(3,4)P2) and phosphatidylinositol 4,5-bisphosphate (PtdIns(4,5)P2), and to a lesser extent to phosphatidylinositol 3-phosphate (PtdIns(3)P), phosphatidylinositol 4-phosphate (PtdIns(4)P), phosphatidylinositol 5-phosphate (PtdIns(5)P) and phosphatidylinositol 3,4,5-trisphosphate (PtdIns(3,4,5)P3). The polypeptide is Obscurin (OBSCN) (Homo sapiens (Human)).